A 937-amino-acid polypeptide reads, in one-letter code: Isoleucine--tRNA ligase (937 aa).

Residues 58–68 (PYANGSIHIGH) carry the 'HIGH' region motif. Glutamate 561 serves as a coordination point for L-isoleucyl-5'-AMP. Positions 602-606 (KMSKS) match the 'KMSKS' region motif. An ATP-binding site is contributed by lysine 605. The Zn(2+) site is built by cysteine 900, cysteine 903, cysteine 920, and cysteine 923.

This sequence belongs to the class-I aminoacyl-tRNA synthetase family. IleS type 1 subfamily. In terms of assembly, monomer. Requires Zn(2+) as cofactor.

It is found in the cytoplasm. The catalysed reaction is tRNA(Ile) + L-isoleucine + ATP = L-isoleucyl-tRNA(Ile) + AMP + diphosphate. Its function is as follows. Catalyzes the attachment of isoleucine to tRNA(Ile). As IleRS can inadvertently accommodate and process structurally similar amino acids such as valine, to avoid such errors it has two additional distinct tRNA(Ile)-dependent editing activities. One activity is designated as 'pretransfer' editing and involves the hydrolysis of activated Val-AMP. The other activity is designated 'posttransfer' editing and involves deacylation of mischarged Val-tRNA(Ile). The polypeptide is Isoleucine--tRNA ligase (Photorhabdus laumondii subsp. laumondii (strain DSM 15139 / CIP 105565 / TT01) (Photorhabdus luminescens subsp. laumondii)).